Reading from the N-terminus, the 336-residue chain is Holliday junction branch migration complex subunit RuvB (336 aa).

A large ATPase domain (RuvB-L) region spans residues 1–180; the sequence is MRRTGIRLSW…FGIVEHLEYY (180 aa). ATP contacts are provided by residues Leu-18, Arg-19, Gly-60, Lys-63, Thr-64, Thr-65, 127–129, Arg-170, Tyr-180, and Arg-217; that span reads EDF. Residue Thr-64 participates in Mg(2+) binding. Positions 181–251 are small ATPAse domain (RuvB-S); the sequence is TPEELAQGVM…RALEALAALG (71 aa). Positions 254–336 are head domain (RuvB-H); the sequence is ELGLEKRDRE…PPPVGPLLEP (83 aa). 2 residues coordinate DNA: Arg-309 and Arg-314.

The protein belongs to the RuvB family. In terms of assembly, homohexamer. Forms an RuvA(8)-RuvB(12)-Holliday junction (HJ) complex. HJ DNA is sandwiched between 2 RuvA tetramers; dsDNA enters through RuvA and exits via RuvB. An RuvB hexamer assembles on each DNA strand where it exits the tetramer. Each RuvB hexamer is contacted by two RuvA subunits (via domain III) on 2 adjacent RuvB subunits; this complex drives branch migration. In the full resolvosome a probable DNA-RuvA(4)-RuvB(12)-RuvC(2) complex forms which resolves the HJ.

The protein resides in the cytoplasm. The catalysed reaction is ATP + H2O = ADP + phosphate + H(+). Its function is as follows. The RuvA-RuvB-RuvC complex processes Holliday junction (HJ) DNA during genetic recombination and DNA repair, while the RuvA-RuvB complex plays an important role in the rescue of blocked DNA replication forks via replication fork reversal (RFR). RuvA specifically binds to HJ cruciform DNA, conferring on it an open structure. The RuvB hexamer acts as an ATP-dependent pump, pulling dsDNA into and through the RuvAB complex. RuvB forms 2 homohexamers on either side of HJ DNA bound by 1 or 2 RuvA tetramers; 4 subunits per hexamer contact DNA at a time. Coordinated motions by a converter formed by DNA-disengaged RuvB subunits stimulates ATP hydrolysis and nucleotide exchange. Immobilization of the converter enables RuvB to convert the ATP-contained energy into a lever motion, pulling 2 nucleotides of DNA out of the RuvA tetramer per ATP hydrolyzed, thus driving DNA branch migration. The RuvB motors rotate together with the DNA substrate, which together with the progressing nucleotide cycle form the mechanistic basis for DNA recombination by continuous HJ branch migration. Branch migration allows RuvC to scan DNA until it finds its consensus sequence, where it cleaves and resolves cruciform DNA. This is Holliday junction branch migration complex subunit RuvB from Thermus thermophilus (strain ATCC BAA-163 / DSM 7039 / HB27).